The following is a 217-amino-acid chain: KH domain-containing protein 3 (217 aa).

The involved in RNA binding stretch occupies residues 1-40 (MDAPRRFPTLVQLMQPKAMPVEVLGHLPKRFSWFHSEFLK). The 64-residue stretch at 40–103 (KNPKVVRLEV…SYQEDTIKMI (64 aa)) folds into the KH; atypical domain. Residues 129–217 (QKAETQRSSI…EDARDPVTRL (89 aa)) are disordered. Over residues 138 to 155 (IEVREAGTQRSVEVREAG) the composition is skewed to basic and acidic residues. Threonine 145 and threonine 156 each carry phosphothreonine; by ATM. Polar residues-rich tracts occupy residues 156 to 170 (TQRSVEVQEVGTQGS) and 177 to 194 (AGTQQSLQAANKSGTQRS). Serine 182 carries the phosphoserine modification. Over residues 205-217 (RFREDARDPVTRL) the composition is skewed to basic and acidic residues.

It belongs to the KHDC1 family. In terms of assembly, component of the subcortical maternal complex (SCMC), at least composed of NLRP5, KHDC3L, OOEP, and TLE6 isoform 1. Within the complex, interacts with NLRP5, KHDC3L and TLE6 isoform 1. The SCMC may facilitate translocation of its components between the nuclear and cytoplasmic compartments. Forms a scaffold complex with OOEP/FLOPED, and interacts with BLM and TRIM25 at DNA replication forks. Interacts with PARP1; the interaction is increased following the formation of DNA double-strand breaks. Interacts with NUMA1. In terms of tissue distribution, expression appears to be maximal in germinal vesicle oocytes, it tails off through metaphase II oocytes and is undetectable following the completion of the oocyte to embryo transition.

The protein resides in the cytoplasm. The protein localises to the cell cortex. Its subcellular location is the nucleus. It localises to the mitochondrion. It is found in the cytoskeleton. The protein resides in the microtubule organizing center. The protein localises to the centrosome. Its subcellular location is the chromosome. Functionally, component of the subcortical maternal complex (SCMC), a multiprotein complex that plays a key role in early embryonic development. The SCMC complex is a structural constituent of cytoplasmic lattices, which consist in fibrous structures found in the cytoplasm of oocytes and preimplantation embryos. They are required to store maternal proteins critical for embryonic development, such as proteins that control epigenetic reprogramming of the preimplantation embryo, and prevent their degradation or activation. KHDC3 ensures proper spindle assembly by regulating the localization of AURKA via RHOA signaling and of PLK1 via a RHOA-independent process. Required for the localization of MAD2L1 to kinetochores to enable spindle assembly checkpoint function. As part of the OOEP-KHDC3 scaffold, recruits BLM and TRIM25 to DNA replication forks, thereby promoting the ubiquitination of BLM by TRIM25, enhancing BLM retainment at replication forks and therefore promoting stalled replication fork restart. Regulates homologous recombination-mediated DNA repair via recruitment of RAD51 to sites of DNA double-strand breaks, and sustainment of PARP1 activity, which in turn modulates downstream ATM or ATR activation. Activation of ATM or ATR in response to DNA double-strand breaks may be cell-type specific. Its role in DNA double-strand break repair is independent of its role in restarting stalled replication forks. Promotes neural stem cell neurogenesis and neuronal differentiation in the hippocampus. May regulate normal development of learning, memory and anxiety. Capable of binding RNA. This is KH domain-containing protein 3 from Homo sapiens (Human).